Consider the following 281-residue polypeptide: Probable endonuclease 4 (281 aa).

Zn(2+)-binding residues include His69, His109, Glu145, Asp179, His182, His216, Asp229, His231, and Glu261.

It belongs to the AP endonuclease 2 family. Zn(2+) is required as a cofactor.

It carries out the reaction Endonucleolytic cleavage to 5'-phosphooligonucleotide end-products.. Endonuclease IV plays a role in DNA repair. It cleaves phosphodiester bonds at apurinic or apyrimidinic (AP) sites, generating a 3'-hydroxyl group and a 5'-terminal sugar phosphate. In Glaesserella parasuis serovar 5 (strain SH0165) (Haemophilus parasuis), this protein is Probable endonuclease 4.